The following is a 690-amino-acid chain: Elongation factor G (690 aa).

Positions 8–283 (DKYRNIGIMA…AVVDFLPSPL (276 aa)) constitute a tr-type G domain. Residues 17-24 (AHIDAGKT), 81-85 (DTPGH), and 135-138 (NKLD) each bind GTP.

This sequence belongs to the TRAFAC class translation factor GTPase superfamily. Classic translation factor GTPase family. EF-G/EF-2 subfamily.

The protein localises to the cytoplasm. Functionally, catalyzes the GTP-dependent ribosomal translocation step during translation elongation. During this step, the ribosome changes from the pre-translocational (PRE) to the post-translocational (POST) state as the newly formed A-site-bound peptidyl-tRNA and P-site-bound deacylated tRNA move to the P and E sites, respectively. Catalyzes the coordinated movement of the two tRNA molecules, the mRNA and conformational changes in the ribosome. This chain is Elongation factor G, found in Zymomonas mobilis subsp. mobilis (strain ATCC 31821 / ZM4 / CP4).